The chain runs to 196 residues: UPF0340 protein TT_C0214 (196 aa).

This sequence belongs to the UPF0340 family.

This chain is UPF0340 protein TT_C0214, found in Thermus thermophilus (strain ATCC BAA-163 / DSM 7039 / HB27).